Consider the following 198-residue polypeptide: Carnitine operon protein CaiE (198 aa).

Positions K174–Q198 are disordered. Residues E180–Q198 are compositionally biased toward basic and acidic residues.

Belongs to the transferase hexapeptide repeat family.

It participates in amine and polyamine metabolism; carnitine metabolism. Its function is as follows. Overproduction of CaiE stimulates the activity of CaiB and CaiD. The chain is Carnitine operon protein CaiE from Salmonella dublin (strain CT_02021853).